The sequence spans 217 residues: MSGGLAPSKSTVYVSNLPFSLTNNDLYRIFSKYGKVVKVTIMKDKDTRKSKGVAFILFLDKDSALNCTRAINNKQLFGRVIKASIAIDNGRAAEFIRRRNYFDKSKCYECGESGHLSYACPKNMLGEREPPKKKEKKKKRKLPEPEEEIEEVEVSEEEGEDPALDSLSQAIAFQQAKIEEEQSKWRPNPGGPSTSDDSRRPRIKKSAYFSDEEELSD.

Residues 10 to 88 (STVYVSNLPF…RVIKASIAID (79 aa)) enclose the RRM domain. The CCHC-type zinc finger occupies 105–122 (SKCYECGESGHLSYACPK). The disordered stretch occupies residues 120 to 217 (CPKNMLGERE…YFSDEEELSD (98 aa)). Acidic residues predominate over residues 145–163 (PEEEIEEVEVSEEEGEDPA). 3 positions are modified to phosphoserine: Ser-155, Ser-210, and Ser-216.

In terms of assembly, component of the U11/U12 snRNPs that are part of the U12-type spliceosome. Interacts with ZRSR1. In terms of tissue distribution, expressed at higher level in heart and testis, and at lower level in cerebellum. Weakly expressed at low level in liver.

It is found in the nucleus. It localises to the nucleoplasm. The sequence is that of Zinc finger CCHC-type and RNA-binding motif-containing protein 1 (Zcrb1) from Mus musculus (Mouse).